The sequence spans 203 residues: Small ribosomal subunit protein uS7A (203 aa).

This sequence belongs to the universal ribosomal protein uS7 family. Component of the small ribosomal subunit (SSU). Mature yeast ribosomes consist of a small (40S) and a large (60S) subunit. The 40S small subunit contains 1 molecule of ribosomal RNA (18S rRNA) and at least 33 different proteins. The large 60S subunit contains 3 rRNA molecules (25S, 5.8S and 5S rRNA) and at least 46 different proteins.

It is found in the cytoplasm. The protein resides in the nucleus. Its subcellular location is the nucleolus. Its function is as follows. Component of the ribosome, a large ribonucleoprotein complex responsible for the synthesis of proteins in the cell. The small ribosomal subunit (SSU) binds messenger RNAs (mRNAs) and translates the encoded message by selecting cognate aminoacyl-transfer RNA (tRNA) molecules. The large subunit (LSU) contains the ribosomal catalytic site termed the peptidyl transferase center (PTC), which catalyzes the formation of peptide bonds, thereby polymerizing the amino acids delivered by tRNAs into a polypeptide chain. The nascent polypeptides leave the ribosome through a tunnel in the LSU and interact with protein factors that function in enzymatic processing, targeting, and the membrane insertion of nascent chains at the exit of the ribosomal tunnel. The protein is Small ribosomal subunit protein uS7A (rps5) of Schizosaccharomyces pombe (strain 972 / ATCC 24843) (Fission yeast).